We begin with the raw amino-acid sequence, 375 residues long: UPF0612 protein C569.003 (375 aa).

It belongs to the UPF0612 family.

The protein localises to the cytoplasm. The protein is UPF0612 protein C569.003 of Schizosaccharomyces pombe (strain 972 / ATCC 24843) (Fission yeast).